We begin with the raw amino-acid sequence, 336 residues long: tRNA N6-adenosine threonylcarbamoyltransferase (336 aa).

Residues His115, His119, and Tyr136 each contribute to the Fe cation site. Substrate is bound by residues 136 to 140, Asp168, Glu185, and Ser266; that span reads YVAGG. Position 294 (Asp294) interacts with Fe cation.

This sequence belongs to the KAE1 / TsaD family. Fe(2+) serves as cofactor.

The protein localises to the cytoplasm. It catalyses the reaction L-threonylcarbamoyladenylate + adenosine(37) in tRNA = N(6)-L-threonylcarbamoyladenosine(37) in tRNA + AMP + H(+). Its function is as follows. Required for the formation of a threonylcarbamoyl group on adenosine at position 37 (t(6)A37) in tRNAs that read codons beginning with adenine. Is probably involved in the transfer of the threonylcarbamoyl moiety of threonylcarbamoyl-AMP (TC-AMP) to the N6 group of A37. This chain is tRNA N6-adenosine threonylcarbamoyltransferase, found in Thermofilum pendens (strain DSM 2475 / Hrk 5).